The chain runs to 232 residues: Phosphate import ATP-binding protein PstB (232 aa).

The region spanning 1–227 (MFNINMEIKE…PKDRRTENYI (227 aa)) is the ABC transporter domain. An ATP-binding site is contributed by 18-25 (GPSGCGKT).

It belongs to the ABC transporter superfamily. Phosphate importer (TC 3.A.1.7) family. As to quaternary structure, the complex is composed of two ATP-binding proteins (PstB), two transmembrane proteins (PstC and PstA) and a solute-binding protein (PstS).

Its subcellular location is the cell membrane. The enzyme catalyses phosphate(out) + ATP + H2O = ADP + 2 phosphate(in) + H(+). Part of the ABC transporter complex PstSACB involved in phosphate import. Responsible for energy coupling to the transport system. This is Phosphate import ATP-binding protein PstB from Mycoplasma mycoides subsp. mycoides SC (strain CCUG 32753 / NCTC 10114 / PG1).